The sequence spans 150 residues: Deoxyuridine 5'-triphosphate nucleotidohydrolase (150 aa).

Residues 65 to 67, Asn78, and 82 to 84 each bind substrate; these read RSG and TID. The segment at 130-150 is disordered; it reads LSDTERGEGGFGHTGVASKAE.

Belongs to the dUTPase family. The cofactor is Mg(2+).

It catalyses the reaction dUTP + H2O = dUMP + diphosphate + H(+). The protein operates within pyrimidine metabolism; dUMP biosynthesis; dUMP from dCTP (dUTP route): step 2/2. Functionally, this enzyme is involved in nucleotide metabolism: it produces dUMP, the immediate precursor of thymidine nucleotides and it decreases the intracellular concentration of dUTP so that uracil cannot be incorporated into DNA. The polypeptide is Deoxyuridine 5'-triphosphate nucleotidohydrolase (Chlorobaculum parvum (strain DSM 263 / NCIMB 8327) (Chlorobium vibrioforme subsp. thiosulfatophilum)).